A 2947-amino-acid polypeptide reads, in one-letter code: 3'-5' exoribonuclease HELZ2 (2947 aa).

The C3H1-type 1 zinc finger occupies 85–114 (PMRYQVCHYYRPGLGCRRHWNRCTFARSPE). The C2H2-type zinc-finger motif lies at 167 to 187 (CFTCCPPCLCPVDPRGHCPKH). Residues 221-245 (YCMYVGRGVPCRHGASRCEYAHSAV) form a C3H1-type 2 zinc finger. The C2H2-type; atypical zinc-finger motif lies at 289–311 (CHACLVTCNSQEAFENHCSSLEH). Residues 769 to 1317 (VGLIAGRRPE…ELLDESQQVT (549 aa)) enclose the UvrD-like helicase ATP-binding domain. 790–797 (GPFGTGKT) contributes to the ATP binding site. The interaction with THRAP3 stretch occupies residues 809 to 1290 (QQPHTKVLIC…GGMSEEDSES (482 aa)). The short motif at 913 to 916 (DEAA) is the DEAA box element. The segment at 1260–1292 (EDTASGNSASRDAAAEVSTLEGGMSEEDSESDF) is disordered. 4 consecutive short sequence motifs (LXXLL motif) follow at residues 1306–1310 (LKELL), 1348–1352 (LWKFL), 1403–1407 (LVQIL), and 2240–2244 (LEGLP). At Arg2381 the chain carries Omega-N-methylarginine. Residues 2413–2947 (PEPCRGNWPR…RVQRKSALSS (535 aa)) are interaction with THRAP3. Residues 2449–2726 (LNQSQDRAVR…IMLDTQYRMH (278 aa)) enclose the UvrD-like helicase ATP-binding 2 domain. 2470-2477 (GPPGTGKT) lines the ATP pocket. Residues 2525–2529 (LGGLL) carry the LXXLL motif 5 motif.

Belongs to the DNA2/NAM7 helicase family. Interacts with PPARA (via DNA-binding domain) and PPARG; the interaction stimulates the transcriptional activity of PPARA and PPARG. Interacts with THRAP3; the interaction is direct and HELZ2 and THRAP3 synergistically enhance the transcriptional activity of PPARG. It is probably part of the peroxisome proliferator activated receptor alpha interacting complex (PRIC).

The protein resides in the cytoplasm. The enzyme catalyses Exonucleolytic cleavage in the 3'- to 5'-direction to yield nucleoside 5'-phosphates.. It carries out the reaction ATP + H2O = ADP + phosphate + H(+). Can degrade highly structured RNAs through its concerted ATP-dependent RNA helicase and 3' to 5' exoribonuclease activities. Shows a strong preference for pyrimidine over purine residues for its nuclease activity. Acts as a transcriptional coactivator for a number of nuclear receptors including PPARA, PPARG, THRA, THRB and RXRA. In Mus musculus (Mouse), this protein is 3'-5' exoribonuclease HELZ2 (Helz2).